A 400-amino-acid chain; its full sequence is Na(+)/H(+) antiporter NhaA (400 aa).

Transmembrane regions (helical) follow at residues 26 to 46 (AGGILLLFSAVVAMLLANSPL), 71 to 91 (LIHWINDGFMAVFFVLVGMEV), 107 to 127 (IFPAIAAIGGMVIPAVVYWFI), 137 to 157 (GWAIPMATDIAFALGIMALLS), 166 to 186 (IFLLALAIIDDLGAIVVIALF), 189 to 209 (HGLSVQALIFSAVAIIVLILL), 212 to 232 (FKVSALCAYMVVGAILWASVL), 233 to 253 (KSGVHATLAGVIIGFSIPLKG), 273 to 293 (FVILPLFAFANAGVSFAGIDV), 299 to 319 (PLLLAIASGLIIGKPVGIFGF), 340 to 360 (IFAVAVLCGIGFTMSMFLASL), and 373 to 393 (LSRLGILLGSTVSAILGYLFL).

The protein belongs to the NhaA Na(+)/H(+) (TC 2.A.33) antiporter family.

The protein localises to the cell inner membrane. It carries out the reaction Na(+)(in) + 2 H(+)(out) = Na(+)(out) + 2 H(+)(in). Its function is as follows. Na(+)/H(+) antiporter that extrudes sodium in exchange for external protons. This chain is Na(+)/H(+) antiporter NhaA, found in Haemophilus influenzae (strain 86-028NP).